Here is a 305-residue protein sequence, read N- to C-terminus: Phosphoribosylaminoimidazole-succinocarboxamide synthase (305 aa).

The protein belongs to the SAICAR synthetase family.

It carries out the reaction 5-amino-1-(5-phospho-D-ribosyl)imidazole-4-carboxylate + L-aspartate + ATP = (2S)-2-[5-amino-1-(5-phospho-beta-D-ribosyl)imidazole-4-carboxamido]succinate + ADP + phosphate + 2 H(+). It functions in the pathway purine metabolism; IMP biosynthesis via de novo pathway; 5-amino-1-(5-phospho-D-ribosyl)imidazole-4-carboxamide from 5-amino-1-(5-phospho-D-ribosyl)imidazole-4-carboxylate: step 1/2. In Polaromonas naphthalenivorans (strain CJ2), this protein is Phosphoribosylaminoimidazole-succinocarboxamide synthase.